Here is a 158-residue protein sequence, read N- to C-terminus: Inner membrane assembly complex subunit 17 (158 aa).

The N-terminal 15 residues, 1–15 (MFRPLVKRVVTRRFL), are a transit peptide targeting the mitochondrion. Over 16–85 (AAANNSNAHI…KTQETSLKKF (70 aa)) the chain is Mitochondrial matrix. Residues 86–108 (VRPAWIFLLMGSIVYLSCHYVWW) traverse the membrane as a helical segment. Residues 109–158 (KLDYEEKELEYTHKVHQLESELAALNEAHNSSVSSDKNSKRSSRKWYKFW) are Mitochondrial intermembrane-facing. Residues 110–140 (LDYEEKELEYTHKVHQLESELAALNEAHNSS) adopt a coiled-coil conformation.

Belongs to the INA17 family. Component of the inner membrane assembly (INA) complex, composed of INA17 and INA22. Interacts with a subset of F(1)F(0)-ATP synthase subunits of the F(1)-domain and the peripheral stalk.

Its subcellular location is the mitochondrion inner membrane. In terms of biological role, component of the INA complex (INAC) that promotes the biogenesis of mitochondrial F(1)F(0)-ATP synthase. INAC facilitates the assembly of the peripheral stalk and promotes the assembly of the catalytic F(1)-domain with the membrane-embedded F(0)-domain. The chain is Inner membrane assembly complex subunit 17 from Kluyveromyces lactis (strain ATCC 8585 / CBS 2359 / DSM 70799 / NBRC 1267 / NRRL Y-1140 / WM37) (Yeast).